A 296-amino-acid polypeptide reads, in one-letter code: Ribosomal RNA small subunit methyltransferase A (296 aa).

The S-adenosyl-L-methionine site is built by asparagine 30, leucine 32, glycine 57, glutamate 78, aspartate 103, and asparagine 128.

It belongs to the class I-like SAM-binding methyltransferase superfamily. rRNA adenine N(6)-methyltransferase family. RsmA subfamily.

The protein localises to the cytoplasm. It carries out the reaction adenosine(1518)/adenosine(1519) in 16S rRNA + 4 S-adenosyl-L-methionine = N(6)-dimethyladenosine(1518)/N(6)-dimethyladenosine(1519) in 16S rRNA + 4 S-adenosyl-L-homocysteine + 4 H(+). Specifically dimethylates two adjacent adenosines (A1518 and A1519) in the loop of a conserved hairpin near the 3'-end of 16S rRNA in the 30S particle. May play a critical role in biogenesis of 30S subunits. The chain is Ribosomal RNA small subunit methyltransferase A from Staphylococcus epidermidis (strain ATCC 35984 / DSM 28319 / BCRC 17069 / CCUG 31568 / BM 3577 / RP62A).